The chain runs to 893 residues: DNA gyrase subunit A (893 aa).

One can recognise a Topo IIA-type catalytic domain in the interval 35 to 501; sequence LPDVRDGLKP…GLEDLEDEDL (467 aa). Residue Tyr123 is the O-(5'-phospho-DNA)-tyrosine intermediate of the active site. Residues 528–534 carry the GyrA-box motif; the sequence is QNRGGRG. Residues 810 to 893 are disordered; the sequence is VNEEDDNEEN…ASDNEEDSDE (84 aa). Composition is skewed to acidic residues over residues 812–821 and 852–862; these read EEDDNEENAD and DAEMESVESPE. The span at 863 to 879 shows a compositional bias: basic and acidic residues; it reads NDDRIDIRQDFMDRVNE. A compositionally biased stretch (acidic residues) spans 880-893; the sequence is DIESASDNEEDSDE.

It belongs to the type II topoisomerase GyrA/ParC subunit family. In terms of assembly, heterotetramer, composed of two GyrA and two GyrB chains. In the heterotetramer, GyrA contains the active site tyrosine that forms a transient covalent intermediate with DNA, while GyrB binds cofactors and catalyzes ATP hydrolysis.

It localises to the cytoplasm. The catalysed reaction is ATP-dependent breakage, passage and rejoining of double-stranded DNA.. A type II topoisomerase that negatively supercoils closed circular double-stranded (ds) DNA in an ATP-dependent manner to modulate DNA topology and maintain chromosomes in an underwound state. Negative supercoiling favors strand separation, and DNA replication, transcription, recombination and repair, all of which involve strand separation. Also able to catalyze the interconversion of other topological isomers of dsDNA rings, including catenanes and knotted rings. Type II topoisomerases break and join 2 DNA strands simultaneously in an ATP-dependent manner. This is DNA gyrase subunit A from Staphylococcus epidermidis (strain ATCC 35984 / DSM 28319 / BCRC 17069 / CCUG 31568 / BM 3577 / RP62A).